We begin with the raw amino-acid sequence, 375 residues long: Probable 1-acyl-sn-glycerol-3-phosphate acyltransferase 5 (375 aa).

Transmembrane regions (helical) follow at residues 21–41 (IICLMVLVSTAFMMLIFWGFL) and 57–77 (CVSFFFGSWLALWPFLFEKIN). Positions 100–105 (HRTEVD) match the HXXXXD motif motif. The next 2 helical transmembrane spans lie at 312 to 332 (YLINCLAVIAFTTICTHLTFF) and 337 to 357 (WFRIYVSLACVYLTSATHFNL).

This sequence belongs to the 1-acyl-sn-glycerol-3-phosphate acyltransferase family. Widely expressed at low level.

It localises to the membrane. It catalyses the reaction a 1-acyl-sn-glycero-3-phosphate + an acyl-CoA = a 1,2-diacyl-sn-glycero-3-phosphate + CoA. The protein operates within phospholipid metabolism; CDP-diacylglycerol biosynthesis; CDP-diacylglycerol from sn-glycerol 3-phosphate: step 2/3. Its function is as follows. May convert lysophosphatidic acid (LPA) into phosphatidic acid by incorporating acyl moiety at the 2 position. Has no activity when expressed in bacteria or yeast. This chain is Probable 1-acyl-sn-glycerol-3-phosphate acyltransferase 5 (LPAT5), found in Arabidopsis thaliana (Mouse-ear cress).